The following is an 809-amino-acid chain: Phenylalanine--tRNA ligase beta subunit (809 aa).

The 114-residue stretch at 39–152 folds into the tRNA-binding domain; it reads KDKWPNVYVG…ADAPVGMLAS (114 aa). In terms of domain architecture, B5 spans 404-492; that stretch reads KDRNSVVLSL…RIAGYDTIPC (89 aa). Mg(2+) is bound by residues Asp-470, Asp-476, Glu-479, and Glu-480. One can recognise an FDX-ACB domain in the interval 717–808; it reads NRFPSVERDL…LNTETGAVLR (92 aa).

Belongs to the phenylalanyl-tRNA synthetase beta subunit family. Type 1 subfamily. As to quaternary structure, tetramer of two alpha and two beta subunits. Mg(2+) is required as a cofactor.

Its subcellular location is the cytoplasm. The enzyme catalyses tRNA(Phe) + L-phenylalanine + ATP = L-phenylalanyl-tRNA(Phe) + AMP + diphosphate + H(+). The protein is Phenylalanine--tRNA ligase beta subunit of Dehalococcoides mccartyi (strain ATCC BAA-2266 / KCTC 15142 / 195) (Dehalococcoides ethenogenes (strain 195)).